The chain runs to 258 residues: Imidazole glycerol phosphate synthase subunit HisF (258 aa).

Catalysis depends on residues D11 and D130.

This sequence belongs to the HisA/HisF family. In terms of assembly, heterodimer of HisH and HisF.

It is found in the cytoplasm. The enzyme catalyses 5-[(5-phospho-1-deoxy-D-ribulos-1-ylimino)methylamino]-1-(5-phospho-beta-D-ribosyl)imidazole-4-carboxamide + L-glutamine = D-erythro-1-(imidazol-4-yl)glycerol 3-phosphate + 5-amino-1-(5-phospho-beta-D-ribosyl)imidazole-4-carboxamide + L-glutamate + H(+). The protein operates within amino-acid biosynthesis; L-histidine biosynthesis; L-histidine from 5-phospho-alpha-D-ribose 1-diphosphate: step 5/9. In terms of biological role, IGPS catalyzes the conversion of PRFAR and glutamine to IGP, AICAR and glutamate. The HisF subunit catalyzes the cyclization activity that produces IGP and AICAR from PRFAR using the ammonia provided by the HisH subunit. This Methylorubrum populi (strain ATCC BAA-705 / NCIMB 13946 / BJ001) (Methylobacterium populi) protein is Imidazole glycerol phosphate synthase subunit HisF.